We begin with the raw amino-acid sequence, 275 residues long: Tryptophan synthase alpha chain (275 aa).

Catalysis depends on proton acceptor residues glutamate 60 and aspartate 71.

It belongs to the TrpA family. As to quaternary structure, tetramer of two alpha and two beta chains.

The catalysed reaction is (1S,2R)-1-C-(indol-3-yl)glycerol 3-phosphate + L-serine = D-glyceraldehyde 3-phosphate + L-tryptophan + H2O. It functions in the pathway amino-acid biosynthesis; L-tryptophan biosynthesis; L-tryptophan from chorismate: step 5/5. Functionally, the alpha subunit is responsible for the aldol cleavage of indoleglycerol phosphate to indole and glyceraldehyde 3-phosphate. The polypeptide is Tryptophan synthase alpha chain (Prochlorococcus marinus (strain MIT 9313)).